A 499-amino-acid chain; its full sequence is Pyruvate kinase 1 (499 aa).

Arginine 50 contacts substrate. K(+) is bound by residues asparagine 52, serine 54, aspartate 84, and threonine 85. Position 52-55 (asparagine 52–histidine 55) interacts with ATP. Arginine 91 is an ATP binding site. Glutamate 241 serves as a coordination point for Mg(2+). Positions 264, 265, and 297 each coordinate substrate. Residue aspartate 265 participates in Mg(2+) binding.

The protein belongs to the pyruvate kinase family. In terms of assembly, homotetramer. It depends on Mg(2+) as a cofactor. Requires K(+) as cofactor.

It catalyses the reaction pyruvate + ATP = phosphoenolpyruvate + ADP + H(+). Its pathway is carbohydrate degradation; glycolysis; pyruvate from D-glyceraldehyde 3-phosphate: step 5/5. Its activity is regulated as follows. Activated by fructose 2,6-bisphosphate, activated by the effector in a cooperative manner. The sequence is that of Pyruvate kinase 1 (PYK1) from Trypanosoma brucei brucei.